The primary structure comprises 376 residues: Multicilin (376 aa).

A coiled-coil region spans residues 165–213 (EQYWRDVADHNQKALGDALVENNQLQVSLTEKQEEIASLKEKNIQLNEL). Positions 230–261 (ERPKHSSGATQGRLPVKRSLEDFYPQSNEPDS) are disordered. The TIRT domain stretch occupies residues 331 to 376 (TELEEDVSFRTSIKEHSTIRTLAFPQGNAFTIRTAAGGYKFRWVPN).

Belongs to the geminin family. Component of the EDM complex, at least composed of e2f4, e2f5, mcidas and tfdp1.

The protein localises to the nucleus. Its function is as follows. Transcription regulator specifically required for multiciliate cell differentiation. Acts in a multiprotein complex containing e2f4 and e2f5 that binds and activate genes required for centriole biogenesis. Activates genes required for centriole assembly (plk4, cep152) and genes specifically required for motile cilia formation (foxj1). Also promotes the deuterosome pathway of centriole biogenesis by activating expression of deup1, but not its paralog cep63. The sequence is that of Multicilin (mcidas) from Xenopus tropicalis (Western clawed frog).